The sequence spans 32 residues: Growth hormone-related protein 4 (32 aa).

The cysteines at positions 4 and 11 are disulfide-linked.

This sequence belongs to the somatotropin/prolactin family. In terms of processing, glycosylated. Placental basal zone cells.

The protein resides in the secreted. The chain is Growth hormone-related protein 4 from Rattus norvegicus (Rat).